A 344-amino-acid polypeptide reads, in one-letter code: Bifunctional trans-3-hydroxy-L-proline dehydratase/2-epimerase (344 aa).

Serine 90 (proton acceptor) is an active-site residue. Residues 91–92, aspartate 252, and 257–258 contribute to the substrate site; these read GS and GT.

This sequence belongs to the proline racemase family.

It catalyses the reaction trans-3-hydroxy-L-proline = 1-pyrroline-2-carboxylate + H2O. The enzyme catalyses trans-3-hydroxy-L-proline = cis-3-hydroxy-D-proline. Its function is as follows. Bifunctional enzyme catalyzing both the dehydration of trans-3-hydroxy-L-proline (t3LHyp) to Delta(1)-pyrroline-2-carboxylate (Pyr2C) and 2-epimerization of t3LHyp to cis-3-hydroxy-D-proline (c3DHyp). No dehydratase activity with L-proline, trans-4-hydroxy-L-proline (t4LHyp), cis-4-hydroxy-L-proline (c4LHyp), D-proline, cis-4-hydroxy-D-proline (c4DHyp), trans-4-hydroxy-D-proline (t4DHyp) or L-serine as substrates. Displays neither t4LHyp epimerase nor proline racemase activity. Is likely involved in a degradation pathway that converts t3LHyp to L-proline, which would allow P.aeruginosa to grow on t3LHyp as a sole carbon source. The protein is Bifunctional trans-3-hydroxy-L-proline dehydratase/2-epimerase of Pseudomonas aeruginosa (strain ATCC 15692 / DSM 22644 / CIP 104116 / JCM 14847 / LMG 12228 / 1C / PRS 101 / PAO1).